A 358-amino-acid chain; its full sequence is 3-dehydroquinate synthase (358 aa).

Residues 70–75, 104–108, 128–129, Lys141, Lys150, and 168–171 each bind NAD(+); these read DGEKFK, GVVGD, TT, and CLQT. 3 residues coordinate Zn(2+): Glu183, His246, and His263.

It belongs to the sugar phosphate cyclases superfamily. Dehydroquinate synthase family. It depends on Co(2+) as a cofactor. The cofactor is Zn(2+). NAD(+) serves as cofactor.

It localises to the cytoplasm. The enzyme catalyses 7-phospho-2-dehydro-3-deoxy-D-arabino-heptonate = 3-dehydroquinate + phosphate. It participates in metabolic intermediate biosynthesis; chorismate biosynthesis; chorismate from D-erythrose 4-phosphate and phosphoenolpyruvate: step 2/7. Its function is as follows. Catalyzes the conversion of 3-deoxy-D-arabino-heptulosonate 7-phosphate (DAHP) to dehydroquinate (DHQ). The protein is 3-dehydroquinate synthase of Shewanella frigidimarina (strain NCIMB 400).